We begin with the raw amino-acid sequence, 143 residues long: Transcriptional regulator MraZ (143 aa).

2 SpoVT-AbrB domains span residues 5–47 (EYHH…SMEE) and 76–119 (AMES…AKER).

It belongs to the MraZ family. As to quaternary structure, forms oligomers.

The protein resides in the cytoplasm. It is found in the nucleoid. The polypeptide is Transcriptional regulator MraZ (Lactobacillus helveticus (strain DPC 4571)).